Reading from the N-terminus, the 31-residue chain is Photosystem II reaction center protein T (31 aa).

Residues 3 to 23 (ALVYTFLLISTLGIIFFGIFF) form a helical membrane-spanning segment.

Belongs to the PsbT family. As to quaternary structure, PSII is composed of 1 copy each of membrane proteins PsbA, PsbB, PsbC, PsbD, PsbE, PsbF, PsbH, PsbI, PsbJ, PsbK, PsbL, PsbM, PsbT, PsbY, PsbZ, Psb30/Ycf12, at least 3 peripheral proteins of the oxygen-evolving complex and a large number of cofactors. It forms dimeric complexes.

It is found in the plastid. The protein localises to the chloroplast thylakoid membrane. Found at the monomer-monomer interface of the photosystem II (PS II) dimer, plays a role in assembly and dimerization of PSII. PSII is a light-driven water plastoquinone oxidoreductase, using light energy to abstract electrons from H(2)O, generating a proton gradient subsequently used for ATP formation. In Nephroselmis olivacea (Green alga), this protein is Photosystem II reaction center protein T.